The primary structure comprises 155 residues: MDLGRFPIISILEDMLEVPEDHNNEKTRNNPSRVYMRDAKAMAATPADVIEHPNAYAFVVDMPGIKGDEIKVQVENDNVLVVSGERQRENKENEGVKYVRMERRMGKFMRKFQLPENADLDKISAVCHDGVLKVTVQKLPPPEPKKPKTIQVQVA.

The 118-residue stretch at 38–155 (DAKAMAATPA…KPKTIQVQVA (118 aa)) folds into the sHSP domain.

It belongs to the small heat shock protein (HSP20) family. As to quaternary structure, may form oligomeric structures.

It is found in the cytoplasm. This Arabidopsis thaliana (Mouse-ear cress) protein is 17.6 kDa class II heat shock protein (HSP17.6).